A 119-amino-acid polypeptide reads, in one-letter code: Putative membrane protein insertion efficiency factor (119 aa).

The protein belongs to the UPF0161 family.

The protein resides in the cell inner membrane. In terms of biological role, could be involved in insertion of integral membrane proteins into the membrane. The polypeptide is Putative membrane protein insertion efficiency factor (Agrobacterium fabrum (strain C58 / ATCC 33970) (Agrobacterium tumefaciens (strain C58))).